The following is a 301-amino-acid chain: tRNA pseudouridine synthase B (301 aa).

Aspartate 47 serves as the catalytic Nucleophile.

It belongs to the pseudouridine synthase TruB family. Type 1 subfamily.

The enzyme catalyses uridine(55) in tRNA = pseudouridine(55) in tRNA. Its function is as follows. Responsible for synthesis of pseudouridine from uracil-55 in the psi GC loop of transfer RNAs. The sequence is that of tRNA pseudouridine synthase B from Cereibacter sphaeroides (strain ATCC 17025 / ATH 2.4.3) (Rhodobacter sphaeroides).